Consider the following 157-residue polypeptide: SsrA-binding protein (157 aa).

The disordered stretch occupies residues 126-157 (GLGKGKQAHDKREAVKERDWQRDRARLMRDRG). A compositionally biased stretch (basic and acidic residues) spans 132–157 (QAHDKREAVKERDWQRDRARLMRDRG).

It belongs to the SmpB family.

The protein localises to the cytoplasm. Its function is as follows. Required for rescue of stalled ribosomes mediated by trans-translation. Binds to transfer-messenger RNA (tmRNA), required for stable association of tmRNA with ribosomes. tmRNA and SmpB together mimic tRNA shape, replacing the anticodon stem-loop with SmpB. tmRNA is encoded by the ssrA gene; the 2 termini fold to resemble tRNA(Ala) and it encodes a 'tag peptide', a short internal open reading frame. During trans-translation Ala-aminoacylated tmRNA acts like a tRNA, entering the A-site of stalled ribosomes, displacing the stalled mRNA. The ribosome then switches to translate the ORF on the tmRNA; the nascent peptide is terminated with the 'tag peptide' encoded by the tmRNA and targeted for degradation. The ribosome is freed to recommence translation, which seems to be the essential function of trans-translation. The chain is SsrA-binding protein from Methylobacterium radiotolerans (strain ATCC 27329 / DSM 1819 / JCM 2831 / NBRC 15690 / NCIMB 10815 / 0-1).